Reading from the N-terminus, the 238-residue chain is Probable septum site-determining protein MinC (238 aa).

This sequence belongs to the MinC family. Interacts with MinD and FtsZ.

Its function is as follows. Cell division inhibitor that blocks the formation of polar Z ring septums. Rapidly oscillates between the poles of the cell to destabilize FtsZ filaments that have formed before they mature into polar Z rings. Prevents FtsZ polymerization. The chain is Probable septum site-determining protein MinC from Aeromonas salmonicida (strain A449).